We begin with the raw amino-acid sequence, 301 residues long: Dihydroorotate dehydrogenase B (NAD(+)), catalytic subunit (301 aa).

Residues Lys-44, 68–72 (NAMGL), and Asn-122 each bind substrate. Position 44–45 (44–45 (KS)) interacts with FMN. Asn-122 serves as a coordination point for FMN. Cys-125 acts as the Nucleophile in catalysis. Residues Lys-160 and Ile-186 each coordinate FMN. Residue 187–188 (NT) coordinates substrate. Residues Gly-212, 238-239 (GG), and 260-261 (GS) each bind FMN.

It belongs to the dihydroorotate dehydrogenase family. Type 1 subfamily. Heterotetramer of 2 PyrK and 2 PyrD type B subunits. The cofactor is FMN.

It is found in the cytoplasm. It catalyses the reaction (S)-dihydroorotate + NAD(+) = orotate + NADH + H(+). It participates in pyrimidine metabolism; UMP biosynthesis via de novo pathway; orotate from (S)-dihydroorotate (NAD(+) route): step 1/1. Functionally, catalyzes the conversion of dihydroorotate to orotate with NAD(+) as electron acceptor. This chain is Dihydroorotate dehydrogenase B (NAD(+)), catalytic subunit (pyrD), found in Methanocella arvoryzae (strain DSM 22066 / NBRC 105507 / MRE50).